The primary structure comprises 91 residues: C-C motif chemokine 5 (91 aa).

The first 23 residues, 1-23, serve as a signal peptide directing secretion; sequence MKVSAATFAILLATATFRAPASA. Cystine bridges form between Cys-33–Cys-57 and Cys-34–Cys-73.

Belongs to the intercrine beta (chemokine CC) family.

Its subcellular location is the secreted. Its function is as follows. Chemoattractant for blood monocytes, memory T-helper cells and eosinophils. Causes the release of histamine from basophils and activates eosinophils. May activate several chemokine receptors including CCR1, CCR3, CCR4 and CCR5. May also be an agonist of the G protein-coupled receptor GPR75. Together with GPR75, may play a role in neuron survival through activation of a downstream signaling pathway involving the PI3, Akt and MAP kinases. By activating GPR75 may also play a role in insulin secretion by islet cells. This is C-C motif chemokine 5 (CCL5) from Canis lupus familiaris (Dog).